Here is a 544-residue protein sequence, read N- to C-terminus: Phenylalanine--tRNA ligase beta subunit (544 aa).

The B5 domain maps to 270-346 (LEPKTRFLTK…KGYGYENIKV (77 aa)). Positions 324, 330, 333, and 334 each coordinate Mg(2+).

The protein belongs to the phenylalanyl-tRNA synthetase beta subunit family. Type 2 subfamily. As to quaternary structure, tetramer of two alpha and two beta subunits. It depends on Mg(2+) as a cofactor.

The protein resides in the cytoplasm. It catalyses the reaction tRNA(Phe) + L-phenylalanine + ATP = L-phenylalanyl-tRNA(Phe) + AMP + diphosphate + H(+). In Methanosarcina barkeri (strain Fusaro / DSM 804), this protein is Phenylalanine--tRNA ligase beta subunit.